A 206-amino-acid chain; its full sequence is Ras-related protein RABG3a (206 aa).

A GTP-binding site is contributed by 15–22 (GDSGVGKT). Residues 37–45 (YKATIGADF) carry the Effector region motif. GTP contacts are provided by residues 63 to 67 (DTAGQ), 125 to 128 (NKID), and 158 to 159 (SA). S-geranylgeranyl cysteine attachment occurs at residues Cys204 and Cys206. Cys206 carries the cysteine methyl ester modification.

Belongs to the small GTPase superfamily. Rab family.

The protein resides in the cell membrane. Functionally, intracellular vesicle trafficking and protein transport. The protein is Ras-related protein RABG3a (RABG3A) of Arabidopsis thaliana (Mouse-ear cress).